The sequence spans 1377 residues: MGGPLTAAGGRGDGGAKAVEPLRPPPPPDPKTMARWYQLEALERAVRGNTLAFLETGSGKTLIAVMLLRAYAHRVRRPDSRRFAVFLVPTVVLVGQQARVVEQHTDLVVKQFCGEMGVDFWDAATWRSQLEDGEVLVMTPQILLDNLRHSFFRLQDIALLIFDECHHARGNTPYACIFKEFYHPQLNSSASDPLPRIFGMSASLIYSKDLNQHNYSKQISEIENLMNSKVYTVDSESALSEYIPFASTKIVHFDDSNISSELHANILSCLNRLTKKHIEALDRKLHGSSLENAKQRISKLHRTFVYCLYNLGVWLAAKAAEVQSYEENSLSFWGETLDKNVEGFIRNYSEEVHRELSCFLKNGHIGEKFPADSQDGILTPKVHCLIRTLLQYRHMQDLRCIVFVQRVITSIVLEPLLSSIHQMSGWNVKHMAGSRPGLLSQSRKNHTEIVESFRKGKVHIIIATQILEEGLDVPSCNLVIRFDPSATVCSFIQSRGRARMENSDYLLLVGRGDVEAHTNAKKFLASGQIMREESLRLGSISCQPLENTLCEDTYYRVESTPAFDIDKASGTCTLHLPKSSPVQTVNVEGEGSILKETVCLKACQELHAIGALTDSLLPELDVPCDEEPDIVVENKIEQPSYFPEEFVDNWRSFSRLGIYYCYKISLEGCPKTASPTDILLALKCDLGSDFTSSSFKLPGGQDNASVTMKYVGIIHLNQEQVIIARRFQTTILSFLIGDDHLEVSNGIKYFHEMQVPIGVVYLLLPLVSGRIDWCSMKFSSSPIYEANNKHMTHCHSCRDIDLLQTKDGPFCRCILKNSIVCTPHNNIFYVISGFLDLDANSRLPQHDGTVVTYKDYFKTRHGLTLTFENQPLLAGSKHVKVRNFLHNYYYKKEKEPGDRYSVELPPELCRIIMSPVSANNLHIFSYVPSIMFRIQCMLLSVKLKVQLGPTVQQFDVPVLKILEALTTKKCQEEFSQESLETLGDSFLKYVTTRHLFSEYRLQHEGILTKMKKNLISNAALCQLACSSNLVGYIHAEEFNPRDWIIPCLDYDERGNKKISFLAPNGMYSQRKMSIKSKRIADSVEALIGAYLSTAGEKAAFLLMKSLGMNIEFHTEIPVERKISMKAEEFIDVRSLEGMLGYKFNDSLLLLEALTHGSYQTSGPTSCYQRLEFLGDAILDHLFTEYYYSKYPDCTPELLTDLRSASVNNNCYAHAAVKSGLNKHILHSSSELHRKMSYYLGQSFTGPSYGWEAGIGLPKVLGDVIESIAGAIYLDSKCDKEVVWRSMKRLLEPLATPETIEPDPVKGLQEFCDRRSFKITYEKNHVDGVSSVIARVKAGETTYSATKSGPCKLAKKLASKAVLKDLIAGHKDTEAAAV.

The span at 1–15 (MGGPLTAAGGRGDGG) shows a compositional bias: gly residues. The disordered stretch occupies residues 1 to 30 (MGGPLTAAGGRGDGGAKAVEPLRPPPPPDP). One can recognise a Helicase ATP-binding domain in the interval 41–222 (ALERAVRGNT…HNYSKQISEI (182 aa)). Residue 54 to 61 (LETGSGKT) participates in ATP binding. A DECH box motif is present at residues 163–166 (DECH). The 174-residue stretch at 388 to 561 (TLLQYRHMQD…DTYYRVESTP (174 aa)) folds into the Helicase C-terminal domain. Residues 534–626 (SLRLGSISCQ…LPELDVPCDE (93 aa)) enclose the Dicer dsRNA-binding fold domain. One can recognise a PAZ domain in the interval 798-913 (RDIDLLQTKD…LPPELCRIIM (116 aa)). RNase III domains are found at residues 940–1095 (SVKL…STAG) and 1132–1276 (VRSL…LDSK). 3 residues coordinate Mg(2+): glutamate 1171, aspartate 1262, and glutamate 1265. The DRBM domain occupies 1302-1367 (DPVKGLQEFC…SKAVLKDLIA (66 aa)).

Belongs to the helicase family. Dicer subfamily. In terms of assembly, may interact with ARGONAUTE1 or PINHEAD through their common PAZ domains. The cofactor is Mg(2+). Mn(2+) is required as a cofactor.

It localises to the nucleus. Functionally, probably involved in the RNA silencing pathway. May cleave double-stranded RNA to produce short 21-24 nucleotides (nt) RNAs which target the selective destruction of complementary RNAs. The protein is Endoribonuclease Dicer homolog 2b (DCL2B) of Oryza sativa subsp. japonica (Rice).